The chain runs to 184 residues: GMP synthase [glutamine-hydrolyzing] subunit A (184 aa).

Positions 3–184 (HIAVIDNHGQ…VFKNFIARCQ (182 aa)) constitute a Glutamine amidotransferase type-1 domain. The active-site Nucleophile is the Cys-75. Catalysis depends on residues His-163 and Glu-165.

Heterodimer composed of a glutamine amidotransferase subunit (A) and a GMP-binding subunit (B).

It catalyses the reaction XMP + L-glutamine + ATP + H2O = GMP + L-glutamate + AMP + diphosphate + 2 H(+). It participates in purine metabolism; GMP biosynthesis; GMP from XMP (L-Gln route): step 1/1. In terms of biological role, catalyzes the synthesis of GMP from XMP. The chain is GMP synthase [glutamine-hydrolyzing] subunit A from Haloquadratum walsbyi (strain DSM 16790 / HBSQ001).